Here is a 122-residue protein sequence, read N- to C-terminus: Large ribosomal subunit protein uL14 (122 aa).

The protein belongs to the universal ribosomal protein uL14 family. As to quaternary structure, part of the 50S ribosomal subunit. Forms a cluster with proteins L3 and L19. In the 70S ribosome, L14 and L19 interact and together make contacts with the 16S rRNA in bridges B5 and B8.

In terms of biological role, binds to 23S rRNA. Forms part of two intersubunit bridges in the 70S ribosome. This is Large ribosomal subunit protein uL14 from Rickettsia felis (strain ATCC VR-1525 / URRWXCal2) (Rickettsia azadi).